Here is a 325-residue protein sequence, read N- to C-terminus: Ribosomal RNA small subunit methyltransferase H (325 aa).

S-adenosyl-L-methionine contacts are provided by residues 41–43 (GGH), aspartate 60, tyrosine 87, aspartate 108, and glutamine 115. Positions 295–325 (DDDEKAANPRAAPVRLRAAERTRASEDRRGS) are disordered. Residues 311 to 325 (RAAERTRASEDRRGS) show a composition bias toward basic and acidic residues.

This sequence belongs to the methyltransferase superfamily. RsmH family.

The protein resides in the cytoplasm. It catalyses the reaction cytidine(1402) in 16S rRNA + S-adenosyl-L-methionine = N(4)-methylcytidine(1402) in 16S rRNA + S-adenosyl-L-homocysteine + H(+). In terms of biological role, specifically methylates the N4 position of cytidine in position 1402 (C1402) of 16S rRNA. This Leifsonia xyli subsp. xyli (strain CTCB07) protein is Ribosomal RNA small subunit methyltransferase H.